A 210-amino-acid polypeptide reads, in one-letter code: Ribosomal RNA large subunit methyltransferase E (210 aa).

S-adenosyl-L-methionine is bound by residues Gly61, Trp63, Asp81, Asp97, and Asp122. Lys162 functions as the Proton acceptor in the catalytic mechanism.

The protein belongs to the class I-like SAM-binding methyltransferase superfamily. RNA methyltransferase RlmE family.

It localises to the cytoplasm. It carries out the reaction uridine(2552) in 23S rRNA + S-adenosyl-L-methionine = 2'-O-methyluridine(2552) in 23S rRNA + S-adenosyl-L-homocysteine + H(+). In terms of biological role, specifically methylates the uridine in position 2552 of 23S rRNA at the 2'-O position of the ribose in the fully assembled 50S ribosomal subunit. This is Ribosomal RNA large subunit methyltransferase E from Xanthomonas campestris pv. campestris (strain 8004).